The primary structure comprises 254 residues: Type III pantothenate kinase 2 (254 aa).

ATP is bound at residue 6–13 (DMGNSHIH). 107 to 110 (GADR) contributes to the substrate binding site. D109 (proton acceptor) is an active-site residue. D130 serves as a coordination point for K(+). T133 is a binding site for ATP. A substrate-binding site is contributed by T185.

Belongs to the type III pantothenate kinase family. In terms of assembly, homodimer. NH4(+) is required as a cofactor. It depends on K(+) as a cofactor.

It localises to the cytoplasm. The catalysed reaction is (R)-pantothenate + ATP = (R)-4'-phosphopantothenate + ADP + H(+). Its pathway is cofactor biosynthesis; coenzyme A biosynthesis; CoA from (R)-pantothenate: step 1/5. Its function is as follows. Catalyzes the phosphorylation of pantothenate (Pan), the first step in CoA biosynthesis. This is Type III pantothenate kinase 2 from Francisella tularensis subsp. holarctica (strain LVS).